The chain runs to 316 residues: Olfactory receptor 10A7 (316 aa).

Topologically, residues 1-25 (MICENHTRVTEFILLGFTNNPEMQV) are extracellular. A glycan (N-linked (GlcNAc...) asparagine) is linked at Asn5. A helical membrane pass occupies residues 26–46 (SLFIFFLAIYTVTLLGNFLIV). The Cytoplasmic portion of the chain corresponds to 47–54 (TVTSVDLA). The helical transmembrane segment at 55 to 75 (LQTPMYFFLQNLSLLEVCFTL) threads the bilayer. Over 76-99 (VMVPKMLVDLVSPRKIISFVGCGT) the chain is Extracellular. A helical membrane pass occupies residues 100–120 (QMYFFFFFGSSECFLLSMMAY). Residues 121 to 139 (DRFVAICNPLHYSVIMNRS) are Cytoplasmic-facing. A helical membrane pass occupies residues 140 to 160 (LCLWMAIGSWMSGVPVSMLQT). The Extracellular segment spans residues 161 to 197 (AWMMALPFCGPNAVDHFFCDGPPVLKLVTVDTTMYEM). The helical transmembrane segment at 198-217 (QALASTLLFIMFPFCLILVS) threads the bilayer. At 218-237 (YTRIIITILRMSSATGRQKA) the chain is on the cytoplasmic side. Residues 238–258 (FSTCSSHLIVVSLFYGTASLT) traverse the membrane as a helical segment. Residues 259–271 (YLRPKSNQSPESK) lie on the Extracellular side of the membrane. The chain crosses the membrane as a helical span at residues 272–292 (KLVSLSYTVITPMLNPIIYGL). The Cytoplasmic segment spans residues 293–316 (RNNEVKGAVKRTITQKVLQKLDVF).

It belongs to the G-protein coupled receptor 1 family.

The protein localises to the cell membrane. In terms of biological role, odorant receptor. In Homo sapiens (Human), this protein is Olfactory receptor 10A7 (OR10A7).